We begin with the raw amino-acid sequence, 155 residues long: 3-hydroxyacyl-[acyl-carrier-protein] dehydratase FabZ (155 aa).

The active site involves His58.

This sequence belongs to the thioester dehydratase family. FabZ subfamily.

Its subcellular location is the cytoplasm. The catalysed reaction is a (3R)-hydroxyacyl-[ACP] = a (2E)-enoyl-[ACP] + H2O. In terms of biological role, involved in unsaturated fatty acids biosynthesis. Catalyzes the dehydration of short chain beta-hydroxyacyl-ACPs and long chain saturated and unsaturated beta-hydroxyacyl-ACPs. The polypeptide is 3-hydroxyacyl-[acyl-carrier-protein] dehydratase FabZ (Rhizobium etli (strain ATCC 51251 / DSM 11541 / JCM 21823 / NBRC 15573 / CFN 42)).